A 519-amino-acid polypeptide reads, in one-letter code: Cobyric acid synthase (519 aa).

One can recognise a GATase cobBQ-type domain in the interval 256–438; the sequence is WLRVAVPRLP…WHGLFENDAF (183 aa). Cys337 functions as the Nucleophile in the catalytic mechanism. His430 is an active-site residue.

The protein belongs to the CobB/CobQ family. CobQ subfamily.

It participates in cofactor biosynthesis; adenosylcobalamin biosynthesis. In terms of biological role, catalyzes amidations at positions B, D, E, and G on adenosylcobyrinic A,C-diamide. NH(2) groups are provided by glutamine, and one molecule of ATP is hydrogenolyzed for each amidation. The protein is Cobyric acid synthase of Saccharopolyspora erythraea (strain ATCC 11635 / DSM 40517 / JCM 4748 / NBRC 13426 / NCIMB 8594 / NRRL 2338).